We begin with the raw amino-acid sequence, 230 residues long: Urease accessory protein UreF (230 aa).

This sequence belongs to the UreF family. As to quaternary structure, ureD, UreF and UreG form a complex that acts as a GTP-hydrolysis-dependent molecular chaperone, activating the urease apoprotein by helping to assemble the nickel containing metallocenter of UreC. The UreE protein probably delivers the nickel.

The protein resides in the cytoplasm. Its function is as follows. Required for maturation of urease via the functional incorporation of the urease nickel metallocenter. The protein is Urease accessory protein UreF of Chromohalobacter salexigens (strain ATCC BAA-138 / DSM 3043 / CIP 106854 / NCIMB 13768 / 1H11).